A 1399-amino-acid chain; its full sequence is DNA-directed RNA polymerase subunit beta' (1399 aa).

Residues C70, C72, C85, and C88 each coordinate Zn(2+). Mg(2+) contacts are provided by D460, D462, and D464. The Zn(2+) site is built by C814, C888, C895, and C898.

This sequence belongs to the RNA polymerase beta' chain family. The RNAP catalytic core consists of 2 alpha, 1 beta, 1 beta' and 1 omega subunit. When a sigma factor is associated with the core the holoenzyme is formed, which can initiate transcription. Mg(2+) is required as a cofactor. The cofactor is Zn(2+).

The catalysed reaction is RNA(n) + a ribonucleoside 5'-triphosphate = RNA(n+1) + diphosphate. In terms of biological role, DNA-dependent RNA polymerase catalyzes the transcription of DNA into RNA using the four ribonucleoside triphosphates as substrates. The polypeptide is DNA-directed RNA polymerase subunit beta' (Pseudomonas savastanoi pv. phaseolicola (strain 1448A / Race 6) (Pseudomonas syringae pv. phaseolicola (strain 1448A / Race 6))).